The sequence spans 521 residues: Cytokinin dehydrogenase 9 (521 aa).

A signal peptide spans 1 to 22; that stretch reads MRPSLLQYLKLLLLLALGGVTT. Residue asparagine 57 is glycosylated (N-linked (GlcNAc...) asparagine). The FAD-binding PCMH-type domain maps to 59-237; the sequence is SSFPPVAVLH…TRARIPLEPA (179 aa). The FAD site is built by alanine 95, glycine 97, and glycine 99. Histidine 100 carries the post-translational modification Pros-8alpha-FAD histidine. Residues serine 101, glutamine 105, aspartate 161, threonine 166, serine 172, valine 176, and isoleucine 227 each contribute to the FAD site. Asparagine 278, asparagine 412, and asparagine 418 each carry an N-linked (GlcNAc...) asparagine glycan. Tyrosine 469 lines the FAD pocket. Asparagine 472 is a glycosylation site (N-linked (GlcNAc...) asparagine). Glutamine 507 provides a ligand contact to FAD.

Belongs to the oxygen-dependent FAD-linked oxidoreductase family. Monomer. Requires FAD as cofactor. In terms of tissue distribution, expressed in inflorescence meristems.

The protein localises to the secreted. Its subcellular location is the extracellular space. It is found in the cytoplasm. The protein resides in the cytosol. It localises to the nucleus. The enzyme catalyses N(6)-dimethylallyladenine + A + H2O = 3-methyl-2-butenal + adenine + AH2. In terms of biological role, catalyzes the oxidation of cytokinins, a family of N(6)-substituted adenine derivatives that are plant hormones, where the substituent is an isopentenyl group. Possesses cytokinin oxidase activity toward trans-zeatin (tZ) and N6-(2-isopentenyl)adenine (2iP) in vitro. Functions as a primary strigolactone-responsive gene to regulate rice tillering, plant height, and panicle size, likely via a secondary response gene, RR5, which encodes a cytokinin-inducible rice type-A response regulator that seems to act as negative regulator of the cytokinin signaling. The sequence is that of Cytokinin dehydrogenase 9 from Oryza sativa subsp. japonica (Rice).